The primary structure comprises 115 residues: NADH-ubiquinone oxidoreductase chain 3 (115 aa).

A run of 3 helical transmembrane segments spans residues 4 to 24 (IVILFINATLSLGLITVAFWL), 55 to 75 (FFLIGITFLLFDLEITLLLPL), and 84 to 104 (TYFTMLVSFLLVSVLALGLMY).

This sequence belongs to the complex I subunit 3 family. As to quaternary structure, core subunit of respiratory chain NADH dehydrogenase (Complex I) which is composed of 45 different subunits. Interacts with TMEM186. Interacts with TMEM242.

Its subcellular location is the mitochondrion inner membrane. It carries out the reaction a ubiquinone + NADH + 5 H(+)(in) = a ubiquinol + NAD(+) + 4 H(+)(out). Its function is as follows. Core subunit of the mitochondrial membrane respiratory chain NADH dehydrogenase (Complex I) which catalyzes electron transfer from NADH through the respiratory chain, using ubiquinone as an electron acceptor. Essential for the catalytic activity of complex I. In Eligmodontia typus (Highland gerbil mouse), this protein is NADH-ubiquinone oxidoreductase chain 3.